We begin with the raw amino-acid sequence, 159 residues long: MAGHTDNEITIAAPMELVWNMTNDIEKWPGLFSEYASVEVLGRDDDKVTFRLTMHPDADGKVWSWVSERVADPVTRTVRAQRVETGPFQYMNIVWEYAETAEGTVMRWTQDFAMKPDAPVDDAWMTDNINRNSRTQMALIRDRIEQAAGERRTASVLAD.

It to polyketide cyclases.

Functionally, involved in developmentally regulated synthesis of a compound biosynthetically related to polyketide antibiotics which is essential for spore color in Streptomyces coelicolor. In Streptomyces coelicolor (strain ATCC BAA-471 / A3(2) / M145), this protein is Putative polyketide cyclase.